The primary structure comprises 1128 residues: Translation initiation factor IF-2 (1128 aa).

Residues 57–519 (NSDKQILSIN…KETTRQRQKR (463 aa)) form a disordered region. The segment covering 70-83 (NKKDNYKQNKEDKS) has biased composition (basic and acidic residues). Over residues 100 to 110 (KKQLLNKPLNK) the composition is skewed to low complexity. A compositionally biased stretch (polar residues) spans 120 to 146 (QLKNPNKPNIYNSSQSQANLTNQNTKS). Over residues 147–158 (KPSEHFNKDKKT) the composition is skewed to basic and acidic residues. Residues 182 to 196 (KNINNNLKSNESSKN) show a composition bias toward low complexity. Residues 201–214 (GDKRELSLKPDQNR) show a composition bias toward basic and acidic residues. Polar residues-rich tracts occupy residues 243-267 (KQNN…NRPG) and 386-397 (AKTNNQKQNIES). Positions 432–445 (RKDWDDSAKLEALR) are enriched in basic and acidic residues. Positions 499-519 (HKSTKQFKKKKKETTRQRQKR) are enriched in basic residues. One can recognise a tr-type G domain in the interval 620-792 (KRPPVITVMG…ILLVSEVEDL (173 aa)). Residues 629–636 (GHVDHGKT) form a G1 region. Residue 629-636 (GHVDHGKT) coordinates GTP. A G2 region spans residues 654-658 (GITQH). The tract at residues 679-682 (DTPG) is G3. Residues 679-683 (DTPGH) and 733-736 (NKID) each bind GTP. Residues 733–736 (NKID) form a G4 region. Residues 769–771 (SAI) form a G5 region.

This sequence belongs to the TRAFAC class translation factor GTPase superfamily. Classic translation factor GTPase family. IF-2 subfamily.

It is found in the cytoplasm. Its function is as follows. One of the essential components for the initiation of protein synthesis. Protects formylmethionyl-tRNA from spontaneous hydrolysis and promotes its binding to the 30S ribosomal subunits. Also involved in the hydrolysis of GTP during the formation of the 70S ribosomal complex. In Prochlorococcus marinus (strain MIT 9312), this protein is Translation initiation factor IF-2.